Consider the following 218-residue polypeptide: Deoxyribose-phosphate aldolase (218 aa).

Asp-89 (proton donor/acceptor) is an active-site residue. Lys-152 acts as the Schiff-base intermediate with acetaldehyde in catalysis. Catalysis depends on Lys-182, which acts as the Proton donor/acceptor.

Belongs to the DeoC/FbaB aldolase family. DeoC type 1 subfamily.

It localises to the cytoplasm. The catalysed reaction is 2-deoxy-D-ribose 5-phosphate = D-glyceraldehyde 3-phosphate + acetaldehyde. It participates in carbohydrate degradation; 2-deoxy-D-ribose 1-phosphate degradation; D-glyceraldehyde 3-phosphate and acetaldehyde from 2-deoxy-alpha-D-ribose 1-phosphate: step 2/2. Its function is as follows. Catalyzes a reversible aldol reaction between acetaldehyde and D-glyceraldehyde 3-phosphate to generate 2-deoxy-D-ribose 5-phosphate. The polypeptide is Deoxyribose-phosphate aldolase (Kocuria rhizophila (strain ATCC 9341 / DSM 348 / NBRC 103217 / DC2201)).